The primary structure comprises 958 residues: Probable transport protein MmpL1 (958 aa).

Transmembrane regions (helical) follow at residues 19–39 (ALSLPIILFWVALTIVVNVVA), 192–212 (SLHTITGISIAVIAIMLFIAY), 216–236 (SAALIMLLTVGLELLAVRGII), 252–272 (VNVLVALTIAASTDYIIFLVG), 295–315 (TAHVVLASGLTVAGAMYCLGF), 329–349 (AIGLVTVMLASLTLAPAIIAV), 377–397 (WPGPVLAATLLIALIGLLALP), 762–782 (YDVMIAVVASLCLIFIIMLGI), 791–811 (VIVGTVALSLGSAFGLSVLIW), 814–834 (ILHMPLHWLVLPMAIIVMLAV), 868–888 (VVTIAGLVFAFTMGSMVASDL), and 906–927 (TLVVRSYMTPALATLLGRWFWW).

The protein belongs to the resistance-nodulation-cell division (RND) (TC 2.A.6) family. MmpL subfamily.

The protein localises to the cell membrane. The polypeptide is Probable transport protein MmpL1 (mmpL1) (Mycobacterium tuberculosis (strain CDC 1551 / Oshkosh)).